Reading from the N-terminus, the 187-residue chain is Large ribosomal subunit protein uL22A (187 aa).

The protein belongs to the universal ribosomal protein uL22 family. As to quaternary structure, component of the large ribosomal subunit (LSU). Mature yeast ribosomes consist of a small (40S) and a large (60S) subunit. The 40S small subunit contains 1 molecule of ribosomal RNA (18S rRNA) and at least 33 different proteins. The large 60S subunit contains 3 rRNA molecules (25S, 5.8S and 5S rRNA) and at least 46 different proteins. uL22 is associated with the polypeptide exit tunnel.

Its subcellular location is the cytoplasm. In terms of biological role, component of the ribosome, a large ribonucleoprotein complex responsible for the synthesis of proteins in the cell. The small ribosomal subunit (SSU) binds messenger RNAs (mRNAs) and translates the encoded message by selecting cognate aminoacyl-transfer RNA (tRNA) molecules. The large subunit (LSU) contains the ribosomal catalytic site termed the peptidyl transferase center (PTC), which catalyzes the formation of peptide bonds, thereby polymerizing the amino acids delivered by tRNAs into a polypeptide chain. The nascent polypeptides leave the ribosome through a tunnel in the LSU and interact with protein factors that function in enzymatic processing, targeting, and the membrane insertion of nascent chains at the exit of the ribosomal tunnel. In Schizosaccharomyces pombe (strain 972 / ATCC 24843) (Fission yeast), this protein is Large ribosomal subunit protein uL22A (rpl1701).